The chain runs to 280 residues: Chaperone for lacto-N-biosidase (280 aa).

The signal sequence occupies residues 1–37 (MPRRHRFAAAIAAVAVAAVLLVTLTVAVVTHGDGAFA).

In terms of assembly, homodimer.

The protein localises to the secreted. In terms of biological role, chaperone required for active expression of the lacto-N-biosidase LnbX. The polypeptide is Chaperone for lacto-N-biosidase (Bifidobacterium longum subsp. longum (strain ATCC 15707 / DSM 20219 / JCM 1217 / NCTC 11818 / E194b)).